The following is a 300-amino-acid chain: Putative glycosyltransferase ORF300 (300 aa).

It belongs to the glycosyltransferase group 1 family. Glycosyltransferase 4 subfamily.

The sequence is that of Putative glycosyltransferase ORF300 from Acidianus hospitalis (AFV-1).